Here is a 642-residue protein sequence, read N- to C-terminus: Rhotekin-2 (642 aa).

The REM-1 domain occupies 30-105 (IKRKKIRESM…AQKRTGHQDF (76 aa)). Residues 306-413 (LDMMSGFLSQ…WLDSLWQHIY (108 aa)) form the PH domain. Disordered regions lie at residues 505–563 (TVLS…GRPS) and 575–642 (LQKS…PKAW). Composition is skewed to basic and acidic residues over residues 597-615 (PEKRAEESDLPEYTKKEYI) and 632-642 (SFREKMNPKAW).

In Danio rerio (Zebrafish), this protein is Rhotekin-2 (rtkn2).